A 660-amino-acid chain; its full sequence is Threonine--tRNA ligase (660 aa).

The TGS domain maps to 1–64; the sequence is MSHSVSLTFP…TEGRIEIVTR (64 aa). A catalytic region spans residues 245 to 547; sequence DHRRLGREMD…LLENFAGHMP (303 aa). The Zn(2+) site is built by Cys341, His392, and His524.

It belongs to the class-II aminoacyl-tRNA synthetase family. Homodimer. It depends on Zn(2+) as a cofactor.

It is found in the cytoplasm. It catalyses the reaction tRNA(Thr) + L-threonine + ATP = L-threonyl-tRNA(Thr) + AMP + diphosphate + H(+). In terms of biological role, catalyzes the attachment of threonine to tRNA(Thr) in a two-step reaction: L-threonine is first activated by ATP to form Thr-AMP and then transferred to the acceptor end of tRNA(Thr). Also edits incorrectly charged L-seryl-tRNA(Thr). The polypeptide is Threonine--tRNA ligase (Sinorhizobium medicae (strain WSM419) (Ensifer medicae)).